Consider the following 143-residue polypeptide: ATP synthase F(0) complex subunit C2, mitochondrial (143 aa).

Residues 1–68 constitute a mitochondrion transit peptide; the sequence is MYTCAKFVST…RSFQTSAISR (68 aa). A helical transmembrane segment spans residues 84 to 104; that stretch reads VGVAGSGAGIGTVFGSLIIGY. N6,N6,N6-trimethyllysine is present on K111. A helical transmembrane segment spans residues 119–139; sequence ILGFALSEAMGLFCLMVAFLI.

The protein belongs to the ATPase C chain family. F-type ATPases have 2 components, CF(1) - the catalytic core - and CF(0) - the membrane proton channel. CF(1) has five subunits: alpha(3), beta(3), gamma(1), delta(1), epsilon(1). CF(0) has three main subunits: a, b and c. Interacts with DNAJC30; interaction is direct. Trimethylated by ATPSCKMT at Lys-111. Methylation is required for proper incorporation of the C subunit into the ATP synthase complex and mitochondrial respiration.

The protein resides in the mitochondrion membrane. Functionally, mitochondrial membrane ATP synthase (F(1)F(0) ATP synthase or Complex V) produces ATP from ADP in the presence of a proton gradient across the membrane which is generated by electron transport complexes of the respiratory chain. F-type ATPases consist of two structural domains, F(1) - containing the extramembraneous catalytic core and F(0) - containing the membrane proton channel, linked together by a central stalk and a peripheral stalk. During catalysis, ATP synthesis in the catalytic domain of F(1) is coupled via a rotary mechanism of the central stalk subunits to proton translocation. Part of the complex F(0) domain. A homomeric c-ring of probably 10 subunits is part of the complex rotary element. The polypeptide is ATP synthase F(0) complex subunit C2, mitochondrial (Bos taurus (Bovine)).